The primary structure comprises 271 residues: Ribose-phosphate pyrophosphokinase 2 (271 aa).

ATP contacts are provided by residues 34–36 (DGE) and 82–83 (RQ). Mg(2+)-binding residues include His-115 and Asp-150. Lys-173 is an active-site residue. D-ribose 5-phosphate is bound by residues Arg-175, Asp-199, and 203-207 (STGGT).

The protein belongs to the ribose-phosphate pyrophosphokinase family. Class III (archaeal) subfamily. The cofactor is Mg(2+).

It localises to the cytoplasm. It carries out the reaction D-ribose 5-phosphate + ATP = 5-phospho-alpha-D-ribose 1-diphosphate + AMP + H(+). It functions in the pathway metabolic intermediate biosynthesis; 5-phospho-alpha-D-ribose 1-diphosphate biosynthesis; 5-phospho-alpha-D-ribose 1-diphosphate from D-ribose 5-phosphate (route I): step 1/1. In terms of biological role, involved in the biosynthesis of the central metabolite phospho-alpha-D-ribosyl-1-pyrophosphate (PRPP) via the transfer of pyrophosphoryl group from ATP to 1-hydroxyl of ribose-5-phosphate (Rib-5-P). In Archaeoglobus fulgidus (strain ATCC 49558 / DSM 4304 / JCM 9628 / NBRC 100126 / VC-16), this protein is Ribose-phosphate pyrophosphokinase 2.